The sequence spans 406 residues: Elongation factor Ts, mitochondrial (406 aa).

Residues 387 to 406 (ARPSDETSFADQVKEAAGLA) form a disordered region.

The protein belongs to the EF-Ts family.

It localises to the mitochondrion. Its function is as follows. Associates with the EF-Tu.GDP complex and induces the exchange of GDP to GTP. It remains bound to the aminoacyl-tRNA.EF-Tu.GTP complex up to the GTP hydrolysis stage on the ribosome. This Malassezia globosa (strain ATCC MYA-4612 / CBS 7966) (Dandruff-associated fungus) protein is Elongation factor Ts, mitochondrial.